Reading from the N-terminus, the 117-residue chain is Ribosome-binding factor A (117 aa).

This sequence belongs to the RbfA family. Monomer. Binds 30S ribosomal subunits, but not 50S ribosomal subunits or 70S ribosomes.

Its subcellular location is the cytoplasm. Functionally, one of several proteins that assist in the late maturation steps of the functional core of the 30S ribosomal subunit. Associates with free 30S ribosomal subunits (but not with 30S subunits that are part of 70S ribosomes or polysomes). Required for efficient processing of 16S rRNA. May interact with the 5'-terminal helix region of 16S rRNA. The chain is Ribosome-binding factor A from Leptospira interrogans serogroup Icterohaemorrhagiae serovar copenhageni (strain Fiocruz L1-130).